The following is a 33-amino-acid chain: Kunitz-type serine protease inhibitor hainantoxin F7-25.66 (33 aa).

The 30-residue stretch at 4–33 (CRLPSDRGRCKASFERWYFNGRTCAKFIYG) folds into the BPTI/Kunitz inhibitor domain.

It belongs to the venom Kunitz-type family. 02 (native) subfamily. As to expression, expressed by the venom gland.

It localises to the secreted. Functionally, serine protease inhibitor that inhibits trypsin at a molar ratio of 1:1. The sequence is that of Kunitz-type serine protease inhibitor hainantoxin F7-25.66 from Cyriopagopus hainanus (Chinese bird spider).